The following is a 328-amino-acid chain: C-type lectin domain family 11 member A (328 aa).

Residues 1–21 (MQAAWLLGALLVPHLLSFGHG) form the signal peptide. Residues 58-111 (PTGVGNKDNLAENSEGKEVWEATETQGEEEEEETTTTPSSSPTPFPSPSPTSED) are disordered. Positions 188–325 (LGHKCFLLSR…CERRLYFVCE (138 aa)) constitute a C-type lectin domain. 2 cysteine pairs are disulfide-bonded: C209-C324 and C301-C316.

O-glycosylated. Probably sulfated on the O-glycans.

Its subcellular location is the cytoplasm. It localises to the secreted. Its function is as follows. Promotes osteogenesis by stimulating the differentiation of mesenchymal progenitors into mature osteoblasts. Important for repair and maintenance of adult bone. In Rattus norvegicus (Rat), this protein is C-type lectin domain family 11 member A (Clec11a).